A 160-amino-acid chain; its full sequence is GTP-dependent dephospho-CoA kinase (160 aa).

Residues D45, I46, V47, D59, K61, E108, and D130 each contribute to the GTP site.

It belongs to the GTP-dependent DPCK family.

The enzyme catalyses 3'-dephospho-CoA + GTP = GDP + CoA + H(+). It participates in cofactor biosynthesis; coenzyme A biosynthesis. In terms of biological role, catalyzes the GTP-dependent phosphorylation of the 3'-hydroxyl group of dephosphocoenzyme A to form coenzyme A (CoA). This is GTP-dependent dephospho-CoA kinase from Staphylothermus marinus (strain ATCC 43588 / DSM 3639 / JCM 9404 / F1).